The following is a 534-amino-acid chain: Anther-specific proline-rich protein APG (534 aa).

Residues 1-35 (MKRSSLVDSCSYSRIFRSIFCLLSFCIFFLTTTNA) form the signal peptide. The segment covering 59–196 (NPPTPDPSPK…SPKPAPSPPK (138 aa)) has biased composition (pro residues). Positions 59 to 202 (NPPTPDPSPK…SPPKPENKTI (144 aa)) are disordered. The Nucleophile role is filled by S211. Active-site residues include D508 and H511.

The protein belongs to the 'GDSL' lipolytic enzyme family. Found in sporophytic and gametophytic cell types in the anther, only in male fertile plants.

The sequence is that of Anther-specific proline-rich protein APG (APG) from Arabidopsis thaliana (Mouse-ear cress).